The following is a 31-amino-acid chain: U14-ctenitoxin-Co1c (31 aa).

In terms of tissue distribution, expressed by the venom gland.

Its subcellular location is the secreted. Its function is as follows. Not toxic to mice by intracerebroventricular injection. The polypeptide is U14-ctenitoxin-Co1c (Ctenus ornatus (Brazilian spider)).